The sequence spans 1357 residues: DNA-directed RNA polymerase subunit beta (1357 aa).

Belongs to the RNA polymerase beta chain family. The RNAP catalytic core consists of 2 alpha, 1 beta, 1 beta' and 1 omega subunit. When a sigma factor is associated with the core the holoenzyme is formed, which can initiate transcription.

It carries out the reaction RNA(n) + a ribonucleoside 5'-triphosphate = RNA(n+1) + diphosphate. DNA-dependent RNA polymerase catalyzes the transcription of DNA into RNA using the four ribonucleoside triphosphates as substrates. In Nitrosomonas europaea (strain ATCC 19718 / CIP 103999 / KCTC 2705 / NBRC 14298), this protein is DNA-directed RNA polymerase subunit beta.